We begin with the raw amino-acid sequence, 189 residues long: MQIWVGLGNPGAQYAMHRHNVGFMAVDTIAEVHRFDPWKKQFQGWSATGRIGNVKVLLLKPATFMNESGRSVGEAMRFFKRETGDVTVFHDELDLAPFKVKVKTGGGTAGHNGLRSTEAHIGNAFRRVRIGIGHPGHKDRVTGYVLGNYVKAELDPLAGMLGAIASEADWLASGDDARFMSEIALRLAD.

Tyrosine 14 contacts tRNA. Histidine 19 functions as the Proton acceptor in the catalytic mechanism. TRNA is bound by residues phenylalanine 64, asparagine 66, and asparagine 112.

The protein belongs to the PTH family. Monomer.

The protein localises to the cytoplasm. It carries out the reaction an N-acyl-L-alpha-aminoacyl-tRNA + H2O = an N-acyl-L-amino acid + a tRNA + H(+). In terms of biological role, hydrolyzes ribosome-free peptidyl-tRNAs (with 1 or more amino acids incorporated), which drop off the ribosome during protein synthesis, or as a result of ribosome stalling. Its function is as follows. Catalyzes the release of premature peptidyl moieties from peptidyl-tRNA molecules trapped in stalled 50S ribosomal subunits, and thus maintains levels of free tRNAs and 50S ribosomes. This chain is Peptidyl-tRNA hydrolase, found in Rhizorhabdus wittichii (strain DSM 6014 / CCUG 31198 / JCM 15750 / NBRC 105917 / EY 4224 / RW1) (Sphingomonas wittichii).